The following is a 494-amino-acid chain: UDP-N-acetylmuramoyl-L-alanyl-D-glutamate--L-lysine ligase (494 aa).

Ser30 contacts UDP-N-acetyl-alpha-D-muramoyl-L-alanyl-D-glutamate. 110 to 116 serves as a coordination point for ATP; sequence GTNGKTS. Residues 152 to 153, Ser179, and Arg187 each bind UDP-N-acetyl-alpha-D-muramoyl-L-alanyl-D-glutamate; that span reads TT. An N6-carboxylysine modification is found at Lys219. The L-lysine recognition motif motif lies at 406-409; the sequence is DNPA.

It belongs to the MurCDEF family. MurE subfamily. Carboxylation is probably crucial for Mg(2+) binding and, consequently, for the gamma-phosphate positioning of ATP.

The protein localises to the cytoplasm. It carries out the reaction UDP-N-acetyl-alpha-D-muramoyl-L-alanyl-D-glutamate + L-lysine + ATP = UDP-N-acetyl-alpha-D-muramoyl-L-alanyl-gamma-D-glutamyl-L-lysine + ADP + phosphate + H(+). Its pathway is cell wall biogenesis; peptidoglycan biosynthesis. Functionally, catalyzes the addition of L-lysine to the nucleotide precursor UDP-N-acetylmuramoyl-L-alanyl-D-glutamate (UMAG) in the biosynthesis of bacterial cell-wall peptidoglycan. The sequence is that of UDP-N-acetylmuramoyl-L-alanyl-D-glutamate--L-lysine ligase from Staphylococcus haemolyticus (strain JCSC1435).